The sequence spans 148 residues: SPbeta prophage-derived disulfide bond formation protein B (148 aa).

The chain crosses the membrane as a helical span at residues 7–26 (KSFFLLLFFLSFFGTMASLF). An intrachain disulfide couples Cys36 to Cys39. Transmembrane regions (helical) follow at residues 41 to 60 (YQRI…LLKK) and 67 to 84 (YVVF…YHYI). Cysteines 95 and 102 form a disulfide. The chain crosses the membrane as a helical span at residues 111 to 135 (GFITLPLMSSVCFALIFGIGLKLII).

It belongs to the DsbB family. BdbC subfamily.

Its subcellular location is the cell membrane. Functionally, important but not absolutely essential for the production of the lantibiotic sublancin 168, it may also be required for the stability of other secreted proteins. Not required for competence for DNA uptake. The polypeptide is SPbeta prophage-derived disulfide bond formation protein B (bdbB) (Bacillus subtilis (strain 168)).